The chain runs to 327 residues: COP9 signalosome complex subunit 7 (327 aa).

The PCI domain occupies 4–165 (VHHRALDALQ…NPPTVNVTSV (162 aa)). Disordered regions lie at residues 233–260 (GGEQLQGGNPGQGQGQGQGGLGKNAGWK) and 276–327 (GGSN…GKKS). A compositionally biased stretch (gly residues) spans 236-255 (QLQGGNPGQGQGQGQGGLGK). Basic residues predominate over residues 315–327 (GARHSKRFLGKKS).

The protein belongs to the CSN7/EIF3M family. CSN7 subfamily. Component of the COP9 signalosome (CSN) complex. As to expression, present in uninduced vegetative hyphae, induced conidiating cultures and in both conidiospores and ascospores.

It is found in the cytoplasm. Its subcellular location is the nucleus. In terms of biological role, component of the COP9 signalosome (CSN) complex that acts as an regulator of the ubiquitin (Ubl) conjugation pathway by mediating the deneddylation of the cullin subunit of SCF-type E3 ubiquitin-protein ligase complexes. The CSN complex seems to link protein degradation to sexual development. May be required for sporulation only at elevated temperatures. In Emericella nidulans (strain FGSC A4 / ATCC 38163 / CBS 112.46 / NRRL 194 / M139) (Aspergillus nidulans), this protein is COP9 signalosome complex subunit 7 (csnG).